The sequence spans 317 residues: Nucleoside ABC transporter permease protein NupC (317 aa).

Helical transmembrane passes span 9–29 (IIVA…IGGV), 35–55 (GIVN…SVVF), 62–82 (MFGS…GALF), 98–118 (IVSG…LLQV), 132–151 (GYWN…IFFT), 155–172 (LPGF…YVLF), 203–223 (AGVL…AQAI), 225–245 (GNFS…AMIF), 251–271 (IGAM…VVGG), and 286–306 (MAPY…AIAP).

The protein belongs to the binding-protein-dependent transport system permease family. In terms of assembly, the complex is composed of two ATP-binding proteins (NupA), two transmembrane proteins (NupB and NupC) and a solute-binding protein (BmpA).

It localises to the cell membrane. Its function is as follows. Part of an ABC transporter complex involved in the uptake of all common nucleosides. Responsible for the translocation of the substrate across the membrane. This chain is Nucleoside ABC transporter permease protein NupC, found in Lactococcus lactis subsp. cremoris (strain MG1363).